A 373-amino-acid polypeptide reads, in one-letter code: MTMKFELDKTSGRARRGRMVFERGTVETPAFMPVGTLGTVKGMTPEEVKDTGAQICLGNTFHLMLRPGTQIIQQHGDLHDFMNWDKPILTDSGGFQVFSLGELRKITEEGVTFRSPINGEKILLTPEKSMQVQRELGSDIVMIFDECTPFPATQAEARSSMELSLRWAERSKQEHGESKAALFGIIQGGMYEELRDISLKGLTDIGFDGYAIGGLSVGEPKEDMMRILEHTAPQMPEQKPRYLMGVGKPEDLVEAVRRGIDMFDCVMPTRNARNGHLFISTGVVKIRNAVHRTDTSPLDENCDCYTCKNYSRAYLHHLDRTNEMLGSRLNTIHNLRFYQKVMSDMRDALDAGTFDDYVKEFYRLRDQSVPALD.

Catalysis depends on D91, which acts as the Proton acceptor. Residues 91–95 (DSGGF), D145, Q187, and G214 each bind substrate. The RNA binding stretch occupies residues 245–251 (GVGKPED). D264 functions as the Nucleophile in the catalytic mechanism. Residues 269 to 273 (TRNAR) form an RNA binding; important for wobble base 34 recognition region. Residues C302, C304, C307, and H333 each coordinate Zn(2+).

It belongs to the queuine tRNA-ribosyltransferase family. Homodimer. Within each dimer, one monomer is responsible for RNA recognition and catalysis, while the other monomer binds to the replacement base PreQ1. The cofactor is Zn(2+).

It carries out the reaction 7-aminomethyl-7-carbaguanine + guanosine(34) in tRNA = 7-aminomethyl-7-carbaguanosine(34) in tRNA + guanine. It functions in the pathway tRNA modification; tRNA-queuosine biosynthesis. Its function is as follows. Catalyzes the base-exchange of a guanine (G) residue with the queuine precursor 7-aminomethyl-7-deazaguanine (PreQ1) at position 34 (anticodon wobble position) in tRNAs with GU(N) anticodons (tRNA-Asp, -Asn, -His and -Tyr). Catalysis occurs through a double-displacement mechanism. The nucleophile active site attacks the C1' of nucleotide 34 to detach the guanine base from the RNA, forming a covalent enzyme-RNA intermediate. The proton acceptor active site deprotonates the incoming PreQ1, allowing a nucleophilic attack on the C1' of the ribose to form the product. After dissociation, two additional enzymatic reactions on the tRNA convert PreQ1 to queuine (Q), resulting in the hypermodified nucleoside queuosine (7-(((4,5-cis-dihydroxy-2-cyclopenten-1-yl)amino)methyl)-7-deazaguanosine). The protein is Queuine tRNA-ribosyltransferase of Idiomarina loihiensis (strain ATCC BAA-735 / DSM 15497 / L2-TR).